Here is a 462-residue protein sequence, read N- to C-terminus: Threonine--tRNA ligase, mitochondrial (462 aa).

The transit peptide at 1 to 45 (MKIQLVRWHCSRNALWNRAFYSTRKATKNASSATPATMTSMVSQR) directs the protein to the mitochondrion.

It belongs to the class-II aminoacyl-tRNA synthetase family.

The protein localises to the mitochondrion matrix. It carries out the reaction tRNA(Thr) + L-threonine + ATP = L-threonyl-tRNA(Thr) + AMP + diphosphate + H(+). This Saccharomyces cerevisiae (strain ATCC 204508 / S288c) (Baker's yeast) protein is Threonine--tRNA ligase, mitochondrial (MST1).